We begin with the raw amino-acid sequence, 831 residues long: MSLTANDESPKPKKNALLKNLEIDDLIHSQFVRSDTNGHRTTRRLFNSDASISHRIRGSVRSDKGLNKIKKGLISQQSKLASENSSQNIVNRDNKMGAVSFPIIEPNIEVSEELKVRIKYDSIKFFNFERLISKSSVIAPLVNKNITSSGPLIGFQRRVNRLKQTWDLATENMEYPYSSDNTPFRDNDSWQWYVPYGGTIKKMKDFSTKRTLPTWEDKIKFLTFLENSKSATYINGNVSLCNHNETDQENEDRKKRKGKVPRIKNKVWFSQIEYIVLRNYEIKPWYTSPFPEHINQNKMVFICEFCLKYMTSRYTFYRHQLKCLTFKPPGNEIYRDGKLSVWEIDGRENVLYCQNLCLLAKCFINSKTLYYDVEPFIFYILTEREDTENHPYQNAAKFHFVGYFSKEKFNSNDYNLSCILTLPIYQRKGYGQFLMEFSYLLSRKESKFGTPEKPLSDLGLLTYRTFWKIKCAEVLLKLRDSARRRSNNKNEDTFQQVSLNDIAKLTGMIPTDVVFGLEQLQVLYRHKTRSLSSLDDFNYIIKIDSWNRIENIYKTWSSKNYPRVKYDKLLWEPIILGPSFGINGMMNLEPTALADEALTNETMAPVISNNTHIENYNNSRAHNKRRRRRRRSSEHKTSKLHVNNIIEPEVPATDFFEDTVSSLTEYMCDYKNTNNDRLIYQAEKRVLESIHDRKGIPRSKFSTETHWELCFTIKNSETPLGNHAARRNDTGISSLEQDEVENDVDTELYVGENAKEDEDEDEDFTLDDDIEDEQISEENDEEEDTYEEDSDDDEDGKRKGQEQDENDIESHIRKERVRKRRKITLIEDDEE.

In terms of domain architecture, MYST-type HAT spans 267–573 (VWFSQIEYIV…VKYDKLLWEP (307 aa)). Residues 300–325 (VFICEFCLKYMTSRYTFYRHQLKCLT) form a C2HC MYST-type zinc finger. The residue at position 367 (Lys-367) is an N6-acetyllysine; by autocatalysis. Acetyl-CoA-binding positions include 419 to 421 (ILT) and 426 to 432 (QRKGYGQ). Glu-452 acts as the Proton donor/acceptor in catalysis. Position 456 (Ser-456) interacts with acetyl-CoA. 2 disordered regions span residues 614–639 (ENYN…KTSK) and 719–813 (PLGN…SHIR). Basic residues predominate over residues 621-633 (AHNKRRRRRRRSS). Composition is skewed to acidic residues over residues 736 to 746 (EQDEVENDVDT) and 755 to 794 (KEDE…DDDE). A compositionally biased stretch (basic and acidic residues) spans 795 to 812 (DGKRKGQEQDENDIESHI).

Belongs to the MYST (SAS/MOZ) family. As to quaternary structure, component of the NuA3 histone acetyltransferase (HAT) complex. The NuA3 HAT complex has 2 functionally distinct forms that participate in transcription. The NuA3a HAT complex is composed of at least NTO1, SAS3, TAF14, YNG1 and EAF6. The NuA3b HAT complex contains an additional subunit, PDP3. SAS3 interacts with CDC68/SPT16. Post-translationally, autoacetylation at Lys-367 is required for proper function.

The protein localises to the nucleus. It carries out the reaction L-lysyl-[protein] + acetyl-CoA = N(6)-acetyl-L-lysyl-[protein] + CoA + H(+). Its function is as follows. Catalytic component of the NuA3 histone acetyltransferase complex, that acetylates H3K14. The NuA3 HAT complex has 2 functionally distinct forms. NuA3a binds H3K4me3, through the PHD finger of YNG1, and acetylates H3K14 at the promoter region of actively transcribed genes to promote transcription initiation. NuA3b binds H3K36me3 at the coding regions of actively transcribed genes, through the PWWP domain of PDP3, and coordinates transcription elongation. In vitro, SAS3 acetylates free histones H3 and H4. It is involved in silencing the HMR locus. The chain is Histone acetyltransferase SAS3 from Saccharomyces cerevisiae (strain ATCC 204508 / S288c) (Baker's yeast).